The sequence spans 219 residues: Large ribosomal subunit protein uL4c (219 aa).

The tract at residues 53–81 (REHTASTKTKSQVRGGGKKPWKQKGTGRA) is disordered. Residues 68-79 (GGKKPWKQKGTG) show a composition bias toward basic residues.

Belongs to the universal ribosomal protein uL4 family. As to quaternary structure, part of the 50S ribosomal subunit.

Its subcellular location is the plastid. The protein localises to the chloroplast. Probably binds the 23S rRNA. The protein is Large ribosomal subunit protein uL4c (rpl4) of Cyanidium caldarium (Red alga).